Here is a 255-residue protein sequence, read N- to C-terminus: Ribonuclease HII (255 aa).

The RNase H type-2 domain maps to 72-255 (RLIAGIDEVG…RTFAPIKDMI (184 aa)). Positions 78, 79, and 170 each coordinate a divalent metal cation.

It belongs to the RNase HII family. Mn(2+) serves as cofactor. Mg(2+) is required as a cofactor.

It localises to the cytoplasm. The enzyme catalyses Endonucleolytic cleavage to 5'-phosphomonoester.. Endonuclease that specifically degrades the RNA of RNA-DNA hybrids. This is Ribonuclease HII from Enterococcus faecalis (strain ATCC 700802 / V583).